Here is a 249-residue protein sequence, read N- to C-terminus: MPAPVLSGPQYLREGLKLVLSPGLRLFVLLPLAINLVLFVGLIYFAGHQFSLWVDALMPSLPSWLSFLSYVIWPLFVVLVAFMVFFSFTMLANIIAAPFNGFLSEKVETVVRGTDDFPPFSWGELIAMIPRTLAREMRKLGYFLPRAIGLFILSLIPVVNLIAAPLWLLFGIWMMAIQYIDYPADNHKMSWQDMLAWLRQKRWQSLGFGGIVYLALLIPLVNILMMPAAVAGATLFWVRERGVENLPAK.

The next 4 membrane-spanning stretches (helical) occupy residues 26–46 (LFVL…IYFA), 71–91 (VIWP…FTML), 150–170 (LFIL…WLLF), and 206–226 (LGFG…ILMM).

Belongs to the CysZ family.

It is found in the cell inner membrane. In terms of biological role, high affinity, high specificity proton-dependent sulfate transporter, which mediates sulfate uptake. Provides the sulfur source for the cysteine synthesis pathway. This chain is Sulfate transporter CysZ, found in Pseudomonas fluorescens (strain ATCC BAA-477 / NRRL B-23932 / Pf-5).